A 423-amino-acid chain; its full sequence is Histidine--tRNA ligase (423 aa).

This sequence belongs to the class-II aminoacyl-tRNA synthetase family. As to quaternary structure, homodimer.

It is found in the cytoplasm. It carries out the reaction tRNA(His) + L-histidine + ATP = L-histidyl-tRNA(His) + AMP + diphosphate + H(+). The sequence is that of Histidine--tRNA ligase from Corynebacterium diphtheriae (strain ATCC 700971 / NCTC 13129 / Biotype gravis).